A 79-amino-acid chain; its full sequence is Putative membrane protein insertion efficiency factor (79 aa).

The protein belongs to the UPF0161 family.

It is found in the cell inner membrane. Its function is as follows. Could be involved in insertion of integral membrane proteins into the membrane. This Prochlorococcus marinus (strain SARG / CCMP1375 / SS120) protein is Putative membrane protein insertion efficiency factor.